Here is a 109-residue protein sequence, read N- to C-terminus: Encapsulin nanocompartment cargo protein EncD (109 aa).

E47 provides a ligand contact to Fe cation. The interval A61 to A94 is disordered. The segment covering A66–G85 has biased composition (low complexity). The interval L100–R106 is probable targeting peptide.

It localises to the encapsulin nanocompartment. Cargo protein of a type 1 encapsulin nanocompartment. May help nucleate Fe atoms in the interior of the encapsulin nanocompartment. Present in about 47 copies/encapsulin nanocompartment. This chain is Encapsulin nanocompartment cargo protein EncD, found in Myxococcus xanthus (strain DK1622).